The following is a 91-amino-acid chain: Acylphosphatase (91 aa).

One can recognise an Acylphosphatase-like domain in the interval 3 to 89 (TLLVRISGKV…PDQPGFSQKP (87 aa)). Catalysis depends on residues Arg-18 and Asn-36.

This sequence belongs to the acylphosphatase family.

It carries out the reaction an acyl phosphate + H2O = a carboxylate + phosphate + H(+). This chain is Acylphosphatase (acyP), found in Rhodospirillum rubrum (strain ATCC 11170 / ATH 1.1.1 / DSM 467 / LMG 4362 / NCIMB 8255 / S1).